The primary structure comprises 530 residues: Bifunctional purine biosynthesis protein PurH (530 aa).

Residues 1 to 149 (MASDFLPVHR…KNFARVAVAT (149 aa)) form the MGS-like domain.

It belongs to the PurH family.

The catalysed reaction is (6R)-10-formyltetrahydrofolate + 5-amino-1-(5-phospho-beta-D-ribosyl)imidazole-4-carboxamide = 5-formamido-1-(5-phospho-D-ribosyl)imidazole-4-carboxamide + (6S)-5,6,7,8-tetrahydrofolate. It carries out the reaction IMP + H2O = 5-formamido-1-(5-phospho-D-ribosyl)imidazole-4-carboxamide. It functions in the pathway purine metabolism; IMP biosynthesis via de novo pathway; 5-formamido-1-(5-phospho-D-ribosyl)imidazole-4-carboxamide from 5-amino-1-(5-phospho-D-ribosyl)imidazole-4-carboxamide (10-formyl THF route): step 1/1. It participates in purine metabolism; IMP biosynthesis via de novo pathway; IMP from 5-formamido-1-(5-phospho-D-ribosyl)imidazole-4-carboxamide: step 1/1. The chain is Bifunctional purine biosynthesis protein PurH from Xylella fastidiosa (strain M12).